The following is a 462-amino-acid chain: Bindin (462 aa).

The N-terminal stretch at 1–19 is a signal peptide; sequence MARQLSVILVALTLTTALA. The propeptide occupies 20-244; that stretch reads ENFPTRTSAP…DSGRSARKKR (225 aa). Disordered regions lie at residues 155–194 and 221–278; these read DDRR…APKD and RTRR…QGMG. Positions 372 to 380 are fucose-binding domain; the sequence is LRHLRHHSN.

Belongs to the bindin family.

It localises to the cytoplasmic vesicle. It is found in the secretory vesicle. The protein resides in the acrosome lumen. Species-specific sea urchin sperm protein required for adhesion of sperm to the egg surface during fertilization. Bindin coats the acrosomal process after it is externalized by the acrosome reaction. It binds to sulfated, fucose-containing polysaccharides on the vitelline layer receptor proteoglycans which cover the egg plasma membrane. This chain is Bindin, found in Lytechinus variegatus (Green sea urchin).